Here is a 238-residue protein sequence, read N- to C-terminus: MNKNIIIKSIAALTILTSVTGVGTTVVEGIQQTAKAEHNVKLIKNTNVAPYNGVVSIGSGTGFIVGKNTIVTNKHVVAGMEIGAHIIAHPNGEYNNGGFYKVKKIVRYSGQEDIAILHVEDKAVHPKNRNFKDYTGILKIASEAKENERISIVGYPEPYINKFQMYESTGKVLSVKGNMIITDAFVEPGNSGSAVFNSKYEVVGVHFGGNGPGNKSTKGYGVYFSPEIKKFIADNTDK.

Positions 1–36 (MNKNIIIKSIAALTILTSVTGVGTTVVEGIQQTAKA) are cleaved as a signal peptide. Catalysis depends on charge relay system residues histidine 75, aspartate 113, and serine 191.

It belongs to the peptidase S1B family.

It is found in the secreted. This is Serine protease SplE (splE) from Staphylococcus aureus (strain USA300).